We begin with the raw amino-acid sequence, 2235 residues long: Mediator of RNA polymerase II transcription subunit 12 (2235 aa).

The segment covering 16-35 (SAIGGASARDSGRADSSSIG) has biased composition (low complexity). 6 disordered regions span residues 16–80 (SAIG…EENL), 268–293 (FPAQQTRDRSPQMLYTGSMQKNSPAS), 835–858 (SVKRSSGSVYSKMDQPEATPGCED), 1900–1959 (SSVT…SPAA), 2134–2160 (GSTAAAGTNQRNSPAISKSGTAAAQGK), and 2183–2202 (WTLLEDGTSSGLSSSNASNS). The span at 280–293 (MLYTGSMQKNSPAS) shows a compositional bias: polar residues. Positions 1900–1916 (SSVTNRSTTSNKQMGTA) are enriched in polar residues. Over residues 1917-1927 (SSGSEISSNKG) the composition is skewed to low complexity. Polar residues predominate over residues 2134-2155 (GSTAAAGTNQRNSPAISKSGTA). The segment covering 2191-2202 (SSGLSSSNASNS) has biased composition (low complexity).

The protein belongs to the Mediator complex subunit 12 family. In terms of assembly, component of the Mediator complex. As to expression, ubiquitous. Higher expression in vascular tissue, shoot apex and developing floral organs.

The protein localises to the nucleus. Functionally, component of the Mediator complex, a coactivator involved in the regulated transcription of nearly all RNA polymerase II-dependent genes. Mediator functions as a bridge to convey information from gene-specific regulatory proteins to the basal RNA polymerase II transcription machinery. The Mediator complex, having a compact conformation in its free form, is recruited to promoters by direct interactions with regulatory proteins and serves for the assembly of a functional preinitiation complex with RNA polymerase II and the general transcription factors. Flowering regulator which suppresses FLC expression, promotes FT and TSF expression and up-regulates SOC1 and FUL mainly in an FT-dependent manner under long-day conditions. Involved in diverse developmental aspects through gene regulation and modulation of the auxin response. Acts closely together with MAB13. Involved in the regulation of embryo patterning and cotyledon organogenesis by transiently repressing a transcriptional program that interferes with this process. This Arabidopsis thaliana (Mouse-ear cress) protein is Mediator of RNA polymerase II transcription subunit 12 (MED12).